A 308-amino-acid polypeptide reads, in one-letter code: Putative gluconeogenesis factor (308 aa).

This sequence belongs to the gluconeogenesis factor family.

Its subcellular location is the cytoplasm. Its function is as follows. Required for morphogenesis under gluconeogenic growth conditions. This chain is Putative gluconeogenesis factor, found in Pasteurella multocida (strain Pm70).